A 174-amino-acid chain; its full sequence is UPF0336 protein MAP_3996c (174 aa).

A MaoC-like domain is found at 11–131 (IGSHYRAPDY…VLAEIRSEVT (121 aa)).

The protein belongs to the UPF0336 family.

This is UPF0336 protein MAP_3996c from Mycolicibacterium paratuberculosis (strain ATCC BAA-968 / K-10) (Mycobacterium paratuberculosis).